The following is a 57-amino-acid chain: MLGWVVTFLVIALIAGILGFGGVAGASIEIAKIIFFIAIVLFLVSAVVGLARGRTRV.

The next 2 membrane-spanning stretches (helical) occupy residues 1-21 and 30-50; these read MLGW…LGFG and IAKI…VVGL.

The protein belongs to the UPF0391 family.

It localises to the cell membrane. This chain is UPF0391 membrane protein BRADO5617, found in Bradyrhizobium sp. (strain ORS 278).